The sequence spans 63 residues: Gallinacin-4 (63 aa).

The first 19 residues, Met-1–Val-19, serve as a signal peptide directing secretion. A propeptide spanning residues Gly-20–Pro-25 is cleaved from the precursor. Disulfide bonds link Cys-31/Cys-59, Cys-38/Cys-53, and Cys-43/Cys-60.

Belongs to the beta-defensin family. As to expression, strong expression in the bone marrow and testis. Widely expressed. Weak expression in the ovarian stroma, but not expressed in the ovarian follicles.

The protein resides in the secreted. It is found in the cytoplasmic granule. In terms of biological role, has bactericidal activity. Potent activity against S.typhimurium and S.entiriditis. The chain is Gallinacin-4 (GAL4) from Gallus gallus (Chicken).